Reading from the N-terminus, the 150-residue chain is 2-aminobenzenesulfonate 2,3-dioxygenase subunit beta (150 aa).

Belongs to the bacterial ring-hydroxylating dioxygenase beta subunit family. Heterotetramer with a alpha2beta2 structure.

It carries out the reaction 2-aminobenzenesulfonate + NADH + O2 + 2 H(+) = 2,3-dihydroxybenzenesulfonate + NH4(+) + NAD(+). Its activity is regulated as follows. Inhibited by o-phenanthroline. In terms of biological role, beta subunit of the oxygenase component of the 2-aminobenzenesulfonate 2,3-dioxygenase system (deaminating) (ABSDOS). Can use 2-aminobenzenesulfonate (ABS), benzenesulfonate (BS), 4-toluenesulfonate (TS), 2-nitrobenzenesulfonate, 3- and 4-aminobenzenesulfonates, 4-chloro- and 4-hydroxybenzenesulfonates and pyridine-3-sulfonate as substrates. No desulfonation of ABS to aminocatechol or aminophenol detected. This chain is 2-aminobenzenesulfonate 2,3-dioxygenase subunit beta, found in Alcaligenes sp.